A 79-amino-acid polypeptide reads, in one-letter code: Cytochrome c oxidase assembly factor 6 homolog (79 aa).

Positions Arg-9–Phe-52 constitute a CHCH domain. The Cx9C motif signature appears at Cys-12–Cys-22. 2 disulfides stabilise this stretch: Cys-12–Cys-44 and Cys-22–Cys-33. The Cx10C motif signature appears at Cys-33–Cys-44.

Belongs to the cytochrome c oxidase subunit 6B family. In terms of assembly, found in a complex with TMEM177, COX20, MT-CO2/COX2, COX18, SCO1 and SCO2. Interacts with COA1, MT-CO2/COX2, SCO1, SCO2 and COX20. Interacts with COX20 in a MT-CO2/COX2- and COX18-dependent manner. Interacts with COX16.

The protein localises to the mitochondrion. It localises to the mitochondrion intermembrane space. In terms of biological role, involved in the maturation of the mitochondrial respiratory chain complex IV subunit MT-CO2/COX2. Thereby, may regulate early steps of complex IV assembly. Mitochondrial respiratory chain complex IV or cytochrome c oxidase is the component of the respiratory chain that catalyzes the transfer of electrons from intermembrane space cytochrome c to molecular oxygen in the matrix and as a consequence contributes to the proton gradient involved in mitochondrial ATP synthesis. May also be required for efficient formation of respiratory supercomplexes comprised of complexes III and IV. This chain is Cytochrome c oxidase assembly factor 6 homolog (Coa6), found in Mus musculus (Mouse).